Here is a 72-residue protein sequence, read N- to C-terminus: UPF0154 protein BH2350 (72 aa).

The chain crosses the membrane as a helical span at residues 3 to 23; sequence WMILLWITLGIVIGIAIGFFI.

This sequence belongs to the UPF0154 family.

It localises to the membrane. This chain is UPF0154 protein BH2350, found in Halalkalibacterium halodurans (strain ATCC BAA-125 / DSM 18197 / FERM 7344 / JCM 9153 / C-125) (Bacillus halodurans).